The following is a 305-amino-acid chain: Putative S-adenosyl-L-methionine-dependent methyltransferase Mvan_1344 (305 aa).

Residues aspartate 130 and 159–160 (DL) contribute to the S-adenosyl-L-methionine site.

This sequence belongs to the UPF0677 family.

Exhibits S-adenosyl-L-methionine-dependent methyltransferase activity. The protein is Putative S-adenosyl-L-methionine-dependent methyltransferase Mvan_1344 of Mycolicibacterium vanbaalenii (strain DSM 7251 / JCM 13017 / BCRC 16820 / KCTC 9966 / NRRL B-24157 / PYR-1) (Mycobacterium vanbaalenii).